Here is a 176-residue protein sequence, read N- to C-terminus: MRKHLSWWWLATVCMLLFSHLSAVQTRGIKHRIKWNRKALPSTAQITEAQVAENRPGAFIKQGRKLDIDFGAEGNRYYEANYWQFPDGIHYNGCSEANVTKEAFVTGCINATQAANQGEFQKPDNKLHQQVLWRLVQELCSLKHCEFWLERGAGLRVTMHQPVLLCLLALIWLTVK.

The first 25 residues, 1–25 (MRKHLSWWWLATVCMLLFSHLSAVQ), serve as a signal peptide directing secretion. Positions 27 to 50 (RGIKHRIKWNRKALPSTAQITEAQ) are flexible tail. T43 is a glycosylation site (O-linked (GalNAc...) threonine). Residues 51–152 (VAENRPGAFI…KHCEFWLERG (102 aa)) are globular. Cystine bridges form between C94–C145 and C108–C140. Residues N98 and N110 are each glycosylated (N-linked (GlcNAc...) asparagine). The cu(2+) binding stretch occupies residues 122–139 (KPDNKLHQQVLWRLVQEL). The GPI-anchor amidated glycine moiety is linked to residue G152. Positions 153-176 (AGLRVTMHQPVLLCLLALIWLTVK) are cleaved as a propeptide — removed in mature form.

Belongs to the prion family. In terms of processing, N-glycosylated. N-glycosylated at two distinct sites. Post-translationally, O-glycosylated. In terms of tissue distribution, expressed in testis, in Sertoli cells, ejaculated spermatozoa and in seminal fluid (at protein level).

It localises to the cell membrane. Functionally, required for normal acrosome reaction and for normal male fertility. Can bind Cu(2+). This chain is Prion-like protein doppel (PRND), found in Homo sapiens (Human).